The chain runs to 268 residues: Ribosomal RNA small subunit methyltransferase A (268 aa).

S-adenosyl-L-methionine is bound by residues Asn23, Ile25, Gly50, Glu72, Asp97, and Asn116.

The protein belongs to the class I-like SAM-binding methyltransferase superfamily. rRNA adenine N(6)-methyltransferase family. RsmA subfamily.

It is found in the cytoplasm. It carries out the reaction adenosine(1518)/adenosine(1519) in 16S rRNA + 4 S-adenosyl-L-methionine = N(6)-dimethyladenosine(1518)/N(6)-dimethyladenosine(1519) in 16S rRNA + 4 S-adenosyl-L-homocysteine + 4 H(+). Its function is as follows. Specifically dimethylates two adjacent adenosines (A1518 and A1519) in the loop of a conserved hairpin near the 3'-end of 16S rRNA in the 30S particle. May play a critical role in biogenesis of 30S subunits. The chain is Ribosomal RNA small subunit methyltransferase A from Rickettsia prowazekii (strain Madrid E).